We begin with the raw amino-acid sequence, 273 residues long: Hydroxyethylthiazole kinase (273 aa).

Met47 provides a ligand contact to substrate. Arg123 and Thr169 together coordinate ATP. Gly196 lines the substrate pocket.

This sequence belongs to the Thz kinase family. Mg(2+) serves as cofactor.

The catalysed reaction is 5-(2-hydroxyethyl)-4-methylthiazole + ATP = 4-methyl-5-(2-phosphooxyethyl)-thiazole + ADP + H(+). It functions in the pathway cofactor biosynthesis; thiamine diphosphate biosynthesis; 4-methyl-5-(2-phosphoethyl)-thiazole from 5-(2-hydroxyethyl)-4-methylthiazole: step 1/1. Its function is as follows. Catalyzes the phosphorylation of the hydroxyl group of 4-methyl-5-beta-hydroxyethylthiazole (THZ). This Desulfotalea psychrophila (strain LSv54 / DSM 12343) protein is Hydroxyethylthiazole kinase.